We begin with the raw amino-acid sequence, 504 residues long: uncharacterized protein (504 aa).

Residues 26–46 traverse the membrane as a helical segment; it reads ILFLLLGLIILVNISINVTTV. Over residues 103–112 the composition is skewed to polar residues; the sequence is PTQCSSSSTH. Disordered stretches follow at residues 103–180, 313–402, and 431–504; these read PTQC…TRPM, YDAR…PLTT, and QRLA…GKLN. Over residues 113–128 the composition is skewed to basic residues; that stretch reads YFRKHSNDRRSRRRYC. A compositionally biased stretch (polar residues) spans 135 to 147; it reads QIRQSNQQQSCHS. Over residues 313–324 the composition is skewed to basic and acidic residues; that stretch reads YDARDQWRRGTE. Polar residues predominate over residues 349-377; the sequence is SSQAHRQNFPSYTHSQPNHSPPQSVGYSS. 2 stretches are compositionally biased toward basic and acidic residues: residues 378 to 389 and 467 to 478; these read RESHEVRRRAPD and LELKRQVQENRG. Positions 494–504 are enriched in basic residues; sequence SLHRSRTGKLN.

It localises to the membrane. This is an uncharacterized protein from Rattus norvegicus (Rat).